A 102-amino-acid polypeptide reads, in one-letter code: Small ribosomal subunit protein uS10 (102 aa).

Belongs to the universal ribosomal protein uS10 family. In terms of assembly, part of the 30S ribosomal subunit.

Functionally, involved in the binding of tRNA to the ribosomes. This chain is Small ribosomal subunit protein uS10, found in Akkermansia muciniphila (strain ATCC BAA-835 / DSM 22959 / JCM 33894 / BCRC 81048 / CCUG 64013 / CIP 107961 / Muc).